We begin with the raw amino-acid sequence, 1651 residues long: Putative serine/threonine-protein kinase/receptor R818 (1651 aa).

The N-terminal stretch at 1 to 19 (MKSIGIFVVALWLTHFCDG) is a signal peptide. Residues asparagine 111, asparagine 135, asparagine 190, asparagine 236, asparagine 275, asparagine 276, asparagine 287, asparagine 452, asparagine 455, asparagine 477, asparagine 495, asparagine 540, asparagine 596, and asparagine 722 are each glycosylated (N-linked (GlcNAc...) asparagine; by host). The helical transmembrane segment at 749-769 (IILAIVIPVSFVICCIIIVLV) threads the bilayer. The 265-residue stretch at 793–1057 (LDFMESLGSG…EIMTKLSTLI (265 aa)) folds into the Protein kinase 1 domain. ATP is bound by residues 799-807 (LGSGGSGEV) and lysine 820. Aspartate 915 serves as the catalytic Proton acceptor. A disordered region spans residues 1089-1115 (IHNNDETKNSFGSTTYGSNTISSSSNT). Over residues 1100 to 1115 (GSTTYGSNTISSSSNT) the composition is skewed to low complexity. The Guanylate cyclase domain maps to 1135-1278 (IIVFTDIISA…VTVNIAAKIT (144 aa)). The 252-residue stretch at 1394–1645 (IQIGKQIGVG…DVIMGLNDML (252 aa)) folds into the Protein kinase 2 domain. Residues 1400–1408 (IGVGSYGIV) and lysine 1421 each bind ATP. Catalysis depends on aspartate 1515, which acts as the Proton acceptor.

Its subcellular location is the membrane. It carries out the reaction L-seryl-[protein] + ATP = O-phospho-L-seryl-[protein] + ADP + H(+). The catalysed reaction is L-threonyl-[protein] + ATP = O-phospho-L-threonyl-[protein] + ADP + H(+). The chain is Putative serine/threonine-protein kinase/receptor R818 from Acanthamoeba polyphaga mimivirus (APMV).